A 269-amino-acid chain; its full sequence is Phosphonates import ATP-binding protein PhnC (269 aa).

Positions 2–245 constitute an ABC transporter domain; it reads LVVEGLTCRF…VARELYDLEA (244 aa). Residue 34-41 participates in ATP binding; that stretch reads GRSGAGKS.

The protein belongs to the ABC transporter superfamily. Phosphonates importer (TC 3.A.1.9.1) family. In terms of assembly, the complex is composed of two ATP-binding proteins (PhnC), two transmembrane proteins (PhnE) and a solute-binding protein (PhnD).

It localises to the cell inner membrane. It catalyses the reaction phosphonate(out) + ATP + H2O = phosphonate(in) + ADP + phosphate + H(+). Part of the ABC transporter complex PhnCDE involved in phosphonates import. Responsible for energy coupling to the transport system. In Bradyrhizobium diazoefficiens (strain JCM 10833 / BCRC 13528 / IAM 13628 / NBRC 14792 / USDA 110), this protein is Phosphonates import ATP-binding protein PhnC.